Consider the following 101-residue polypeptide: Small ribosomal subunit protein uS14 (101 aa).

Belongs to the universal ribosomal protein uS14 family. In terms of assembly, part of the 30S ribosomal subunit. Contacts proteins S3 and S10.

In terms of biological role, binds 16S rRNA, required for the assembly of 30S particles and may also be responsible for determining the conformation of the 16S rRNA at the A site. The sequence is that of Small ribosomal subunit protein uS14 from Aliivibrio fischeri (strain ATCC 700601 / ES114) (Vibrio fischeri).